The following is a 651-amino-acid chain: Beta-glucuronidase (651 aa).

The signal sequence occupies residues 1–22 (MARGSAVAWAAFGPLLWGCALG). N-linked (GlcNAc...) asparagine glycans are attached at residues Asn-173, Asn-190, Asn-272, and Asn-420. The active-site Proton donor is Glu-451. N-linked (GlcNAc...) asparagine glycosylation is present at Asn-631.

Belongs to the glycosyl hydrolase 2 family. As to quaternary structure, homotetramer.

It localises to the lysosome. It carries out the reaction a beta-D-glucuronoside + H2O = D-glucuronate + an alcohol. Its activity is regulated as follows. Inhibited by L-aspartic acid. Plays an important role in the degradation of dermatan and keratan sulfates. The sequence is that of Beta-glucuronidase (GUSB) from Pongo abelii (Sumatran orangutan).